A 107-amino-acid polypeptide reads, in one-letter code: Thioredoxin-1 (107 aa).

A Thioredoxin domain is found at 2–106 (ASVRTMTDFH…LTNMMAKLVK (105 aa)). Catalysis depends on nucleophile residues Cys-31 and Cys-34. Residues Cys-31 and Cys-34 are joined by a disulfide bond.

The protein belongs to the thioredoxin family.

It is found in the nucleus. Its function is as follows. Participates in various redox reactions through the reversible oxidation of its active center dithiol to a disulfide and catalyzes dithiol-disulfide exchange reactions. As a reducing substrate of peroxiredoxin 1, thioredoxin 2 is preferred over thioredoxin 1. Required for female meiosis and early embryonic development. This chain is Thioredoxin-1 (dhd), found in Drosophila yakuba (Fruit fly).